The primary structure comprises 312 residues: Tyrosine recombinase XerC (312 aa).

Residues 10–101 (PDLQAARESW…GIRSLLRFLE (92 aa)) form the Core-binding (CB) domain. In terms of domain architecture, Tyr recombinase spans 122 to 306 (SLPKPLTASD…DTARLLEIYE (185 aa)). Residues arginine 165, lysine 190, histidine 258, arginine 261, and histidine 284 contribute to the active site. The active-site O-(3'-phospho-DNA)-tyrosine intermediate is the tyrosine 293.

It belongs to the 'phage' integrase family. XerC subfamily. As to quaternary structure, forms a cyclic heterotetrameric complex composed of two molecules of XerC and two molecules of XerD.

The protein resides in the cytoplasm. Site-specific tyrosine recombinase, which acts by catalyzing the cutting and rejoining of the recombining DNA molecules. The XerC-XerD complex is essential to convert dimers of the bacterial chromosome into monomers to permit their segregation at cell division. It also contributes to the segregational stability of plasmids. The protein is Tyrosine recombinase XerC of Mesorhizobium japonicum (strain LMG 29417 / CECT 9101 / MAFF 303099) (Mesorhizobium loti (strain MAFF 303099)).